A 499-amino-acid polypeptide reads, in one-letter code: Serine/threonine-protein kinase SSN3 (499 aa).

The segment at 1–21 is disordered; sequence MSHSNPPTGASGGPGSASASA. Positions 61–442 constitute a Protein kinase domain; that stretch reads YQVIGFISSG…AAAALQHNFF (382 aa). Residues 67–75 and Lys91 each bind ATP; that span reads ISSGTYGRV. Asp193 serves as the catalytic Proton acceptor. 2 disordered regions span residues 332-376 and 463-499; these read SASG…SAAA and RRVS…RVKE. The segment covering 365–376 has biased composition (low complexity); it reads SSSSANSSSAAA. Positions 463–472 are enriched in basic and acidic residues; sequence RRVSQEDNDI.

Belongs to the protein kinase superfamily. CMGC Ser/Thr protein kinase family. CDC2/CDKX subfamily. In terms of assembly, component of the SRB8-11 complex, a regulatory module of the Mediator complex. The cofactor is Mg(2+).

It localises to the nucleus. The catalysed reaction is L-seryl-[protein] + ATP = O-phospho-L-seryl-[protein] + ADP + H(+). The enzyme catalyses L-threonyl-[protein] + ATP = O-phospho-L-threonyl-[protein] + ADP + H(+). It carries out the reaction [DNA-directed RNA polymerase] + ATP = phospho-[DNA-directed RNA polymerase] + ADP + H(+). Component of the SRB8-11 complex. The SRB8-11 complex is a regulatory module of the Mediator complex which is itself involved in regulation of basal and activated RNA polymerase II-dependent transcription. The SRB8-11 complex may be involved in the transcriptional repression of a subset of genes regulated by Mediator. It may inhibit the association of the Mediator complex with RNA polymerase II to form the holoenzyme complex. The SRB8-11 complex phosphorylates the C-terminal domain (CTD) of the largest subunit of RNA polymerase II. This chain is Serine/threonine-protein kinase SSN3 (SSN3), found in Pyricularia oryzae (strain 70-15 / ATCC MYA-4617 / FGSC 8958) (Rice blast fungus).